A 183-amino-acid polypeptide reads, in one-letter code: Probable cobalt-precorrin-6B C(15)-methyltransferase (decarboxylating) (183 aa).

S-adenosyl-L-methionine-binding positions include threonine 19, 43-47 (GCGSG), aspartate 64, and alanine 92.

It belongs to the methyltransferase superfamily. Archaeal-type CbiT family.

The catalysed reaction is Co-precorrin-6B + S-adenosyl-L-methionine = Co-precorrin-7 + S-adenosyl-L-homocysteine + CO2. The protein operates within cofactor biosynthesis; adenosylcobalamin biosynthesis; cob(II)yrinate a,c-diamide from sirohydrochlorin (anaerobic route): step 8/10. In terms of biological role, catalyzes the methylation of C-15 in cobalt-precorrin-6B followed by the decarboxylation of C-12 to form cobalt-precorrin-7. The sequence is that of Probable cobalt-precorrin-6B C(15)-methyltransferase (decarboxylating) from Methanocaldococcus jannaschii (strain ATCC 43067 / DSM 2661 / JAL-1 / JCM 10045 / NBRC 100440) (Methanococcus jannaschii).